The sequence spans 90 residues: Small ribosomal subunit protein uS15 (90 aa).

Belongs to the universal ribosomal protein uS15 family. In terms of assembly, part of the 30S ribosomal subunit. Forms a bridge to the 50S subunit in the 70S ribosome, contacting the 23S rRNA.

In terms of biological role, one of the primary rRNA binding proteins, it binds directly to 16S rRNA where it helps nucleate assembly of the platform of the 30S subunit by binding and bridging several RNA helices of the 16S rRNA. Functionally, forms an intersubunit bridge (bridge B4) with the 23S rRNA of the 50S subunit in the ribosome. The polypeptide is Small ribosomal subunit protein uS15 (Helicobacter acinonychis (strain Sheeba)).